The chain runs to 352 residues: Protein RecA (352 aa).

65–72 (GPESSGKT) serves as a coordination point for ATP.

The protein belongs to the RecA family.

It is found in the cytoplasm. Can catalyze the hydrolysis of ATP in the presence of single-stranded DNA, the ATP-dependent uptake of single-stranded DNA by duplex DNA, and the ATP-dependent hybridization of homologous single-stranded DNAs. It interacts with LexA causing its activation and leading to its autocatalytic cleavage. Plays a functional role in the DNA rearrangement associated with the phenotypic switching from a pathogenic smooth to a nonpathogenic rough form in this bacterium. This is Protein RecA from Pseudomonas tolaasii.